The following is a 260-amino-acid chain: Indole-3-glycerol phosphate synthase (260 aa).

Belongs to the TrpC family.

It catalyses the reaction 1-(2-carboxyphenylamino)-1-deoxy-D-ribulose 5-phosphate + H(+) = (1S,2R)-1-C-(indol-3-yl)glycerol 3-phosphate + CO2 + H2O. It functions in the pathway amino-acid biosynthesis; L-tryptophan biosynthesis; L-tryptophan from chorismate: step 4/5. This is Indole-3-glycerol phosphate synthase from Staphylococcus aureus (strain COL).